The chain runs to 530 residues: Phosphoenolpyruvate carboxykinase (ATP) (530 aa).

Residues Arg-58, Tyr-195, and Lys-201 each coordinate substrate. Residues Lys-201, His-220, and 236–244 (GLSGTGKTT) each bind ATP. Mn(2+) is bound by residues Lys-201 and His-220. Asp-257 contributes to the Mn(2+) binding site. ATP-binding positions include Glu-285, Arg-321, 440 to 441 (RI), and Thr-446. A substrate-binding site is contributed by Arg-321.

It belongs to the phosphoenolpyruvate carboxykinase (ATP) family. It depends on Mn(2+) as a cofactor.

It localises to the cytoplasm. The catalysed reaction is oxaloacetate + ATP = phosphoenolpyruvate + ADP + CO2. It participates in carbohydrate biosynthesis; gluconeogenesis. Involved in the gluconeogenesis. Catalyzes the conversion of oxaloacetate (OAA) to phosphoenolpyruvate (PEP) through direct phosphoryl transfer between the nucleoside triphosphate and OAA. The sequence is that of Phosphoenolpyruvate carboxykinase (ATP) from Staphylococcus epidermidis (strain ATCC 35984 / DSM 28319 / BCRC 17069 / CCUG 31568 / BM 3577 / RP62A).